The following is a 513-amino-acid chain: 2,3-bisphosphoglycerate-independent phosphoglycerate mutase (513 aa).

Mn(2+) is bound by residues Asp-13 and Ser-63. Ser-63 (phosphoserine intermediate) is an active-site residue. Substrate contacts are provided by residues His-124, 154 to 155, Arg-186, Arg-192, 262 to 265, and Lys-335; these read RD and RADR. Mn(2+)-binding residues include Asp-403, His-407, Asp-444, His-445, and His-463.

Belongs to the BPG-independent phosphoglycerate mutase family. Monomer. Requires Mn(2+) as cofactor.

It carries out the reaction (2R)-2-phosphoglycerate = (2R)-3-phosphoglycerate. Its pathway is carbohydrate degradation; glycolysis; pyruvate from D-glyceraldehyde 3-phosphate: step 3/5. Its function is as follows. Catalyzes the interconversion of 2-phosphoglycerate and 3-phosphoglycerate. This is 2,3-bisphosphoglycerate-independent phosphoglycerate mutase from Myxococcus xanthus (strain DK1622).